The following is a 174-amino-acid chain: MIEAQVGRRYAEAIYEIAESNDNVKELYETLNGVMELYNTDKEFKTLVDHPLIKREDKKEFAKKIFGELEESSLNIIFYLIEKDRLSSIRGIVAEYLKIYYAKNQILDVEAIFAIEPTKDQKAKLIEQLEKKTGKKVNLEVSIDKSIIAGGIIKIGDEIIDGSVRRQLDTIARS.

This sequence belongs to the ATPase delta chain family. As to quaternary structure, F-type ATPases have 2 components, F(1) - the catalytic core - and F(0) - the membrane proton channel. F(1) has five subunits: alpha(3), beta(3), gamma(1), delta(1), epsilon(1). F(0) has three main subunits: a(1), b(2) and c(10-14). The alpha and beta chains form an alternating ring which encloses part of the gamma chain. F(1) is attached to F(0) by a central stalk formed by the gamma and epsilon chains, while a peripheral stalk is formed by the delta and b chains.

Its subcellular location is the cell inner membrane. In terms of biological role, f(1)F(0) ATP synthase produces ATP from ADP in the presence of a proton or sodium gradient. F-type ATPases consist of two structural domains, F(1) containing the extramembraneous catalytic core and F(0) containing the membrane proton channel, linked together by a central stalk and a peripheral stalk. During catalysis, ATP synthesis in the catalytic domain of F(1) is coupled via a rotary mechanism of the central stalk subunits to proton translocation. Functionally, this protein is part of the stalk that links CF(0) to CF(1). It either transmits conformational changes from CF(0) to CF(1) or is implicated in proton conduction. The protein is ATP synthase subunit delta, sodium ion specific of Propionigenium modestum.